Reading from the N-terminus, the 299-residue chain is Protein-methionine-sulfoxide reductase catalytic subunit MsrP (299 aa).

A signal peptide (tat-type signal) is located at residues 1 to 44 (MAHRWINDLTPADITPRGAWMNRRQVMAGMAGAGLAAFAGSAQA). Residues asparagine 59, 62–63 (YE), cysteine 117, threonine 152, asparagine 200, arginine 205, and 216–218 (SIK) contribute to the Mo-molybdopterin site.

The protein belongs to the MsrP family. Heterodimer of a catalytic subunit (MsrP) and a heme-binding subunit (MsrQ). Requires Mo-molybdopterin as cofactor. Predicted to be exported by the Tat system. The position of the signal peptide cleavage has not been experimentally proven.

It localises to the periplasm. The enzyme catalyses L-methionyl-[protein] + a quinone + H2O = L-methionyl-(S)-S-oxide-[protein] + a quinol. It catalyses the reaction L-methionyl-[protein] + a quinone + H2O = L-methionyl-(R)-S-oxide-[protein] + a quinol. Its function is as follows. Part of the MsrPQ system that repairs oxidized periplasmic proteins containing methionine sulfoxide residues (Met-O), using respiratory chain electrons. Thus protects these proteins from oxidative-stress damage caused by reactive species of oxygen and chlorine generated by the host defense mechanisms. MsrPQ is essential for the maintenance of envelope integrity under bleach stress, rescuing a wide series of structurally unrelated periplasmic proteins from methionine oxidation. The catalytic subunit MsrP is non-stereospecific, being able to reduce both (R-) and (S-) diastereoisomers of methionine sulfoxide. This Ruegeria pomeroyi (strain ATCC 700808 / DSM 15171 / DSS-3) (Silicibacter pomeroyi) protein is Protein-methionine-sulfoxide reductase catalytic subunit MsrP.